The following is a 976-amino-acid chain: Alpha-amylase (976 aa).

The N-terminal stretch at 1-33 is a signal peptide; that stretch reads MKRGKLWGRLVSAAGLSLSIFLSSIGNVSTAYA. The interval 45–98 is disordered; the sequence is TKENTESATDASSNEASDAEADNDTDEAITDASSKELSAENDGASESDSSFDEY. The span at 50–60 shows a compositional bias: low complexity; that stretch reads ESATDASSNEA. Composition is skewed to acidic residues over residues 61–73 and 87–96; these read SDAE…DEAI and GASESDSSFD. Residues asparagine 243, threonine 284, and aspartate 293 each contribute to the Ca(2+) site. Aspartate 323 (nucleophile) is an active-site residue. Position 327 (histidine 327) interacts with Ca(2+). Glutamate 375 functions as the Proton donor in the catalytic mechanism.

The protein belongs to the glycosyl hydrolase 13 family. As to quaternary structure, monomer. The cofactor is Ca(2+).

The catalysed reaction is Endohydrolysis of (1-&gt;4)-alpha-D-glucosidic linkages in polysaccharides containing three or more (1-&gt;4)-alpha-linked D-glucose units.. This Butyrivibrio fibrisolvens protein is Alpha-amylase (amyA).